Consider the following 211-residue polypeptide: Regulator of G-protein signaling 2 (211 aa).

Positions 32–66 are necessary for membrane association; sequence KMKRTLLKDWKTRLSYFLQNSSTPGKPKTGKKSKQ. The necessary to inhibit protein synthesis stretch occupies residues 79 to 116; it reads LWAEAFDELLASKYGLAAFRAFLKSEFCEENIEFWLAC. Positions 83–199 constitute an RGS domain; sequence AFDELLASKY…LESEFYQDLC (117 aa).

Interacts with GNAQ. Does not interact with GNAI1 and GNAI3. Interacts with EIF2B5. Interacts with PRKG1 (isoform alpha). In terms of processing, phosphorylated by protein kinase C. Phosphorylation by PRKG1 leads to activation of RGS2 activity.

Its subcellular location is the cell membrane. It localises to the cytoplasm. The protein resides in the nucleus. It is found in the nucleolus. Functionally, regulates G protein-coupled receptor signaling cascades. Inhibits signal transduction by increasing the GTPase activity of G protein alpha subunits, thereby driving them into their inactive GDP-bound form. It is involved in the negative regulation of the angiotensin-activated signaling pathway. Plays a role in the regulation of blood pressure in response to signaling via G protein-coupled receptors and GNAQ. Plays a role in regulating the constriction and relaxation of vascular smooth muscle. Binds EIF2B5 and blocks its activity, thereby inhibiting the translation of mRNA into protein. The sequence is that of Regulator of G-protein signaling 2 (Rgs2) from Rattus norvegicus (Rat).